The following is a 183-amino-acid chain: Orotate phosphoribosyltransferase (183 aa).

5-phospho-alpha-D-ribose 1-diphosphate-binding positions include Arg-90, Lys-91, Lys-94, and 115–123; that span reads DDVATTGGS. Residues Thr-119 and Arg-147 each coordinate orotate.

This sequence belongs to the purine/pyrimidine phosphoribosyltransferase family. PyrE subfamily. Homodimer. Mg(2+) is required as a cofactor.

It carries out the reaction orotidine 5'-phosphate + diphosphate = orotate + 5-phospho-alpha-D-ribose 1-diphosphate. Its pathway is pyrimidine metabolism; UMP biosynthesis via de novo pathway; UMP from orotate: step 1/2. Its function is as follows. Catalyzes the transfer of a ribosyl phosphate group from 5-phosphoribose 1-diphosphate to orotate, leading to the formation of orotidine monophosphate (OMP). In Methanopyrus kandleri (strain AV19 / DSM 6324 / JCM 9639 / NBRC 100938), this protein is Orotate phosphoribosyltransferase.